We begin with the raw amino-acid sequence, 32 residues long: Conotoxin pr6b (32 aa).

Residues proline 6, proline 13, proline 20, and proline 29 each carry the 4-hydroxyproline modification. 3 cysteine pairs are disulfide-bonded: cysteine 7–cysteine 18, cysteine 14–cysteine 23, and cysteine 17–cysteine 31.

As to expression, expressed by the venom duct.

The protein localises to the secreted. Its function is as follows. Intraperitoneal injection into fish (0.5 nmol) provokes vertical suspension and paralysis after 6 minutes. The protein is Conotoxin pr6b of Conus parius (Cone snail).